We begin with the raw amino-acid sequence, 127 residues long: Small ribosomal subunit protein uS13 (127 aa).

The protein belongs to the universal ribosomal protein uS13 family. In terms of assembly, part of the 30S ribosomal subunit. Forms a loose heterodimer with protein S19. Forms two bridges to the 50S subunit in the 70S ribosome.

Its function is as follows. Located at the top of the head of the 30S subunit, it contacts several helices of the 16S rRNA. In the 70S ribosome it contacts the 23S rRNA (bridge B1a) and protein L5 of the 50S subunit (bridge B1b), connecting the 2 subunits; these bridges are implicated in subunit movement. Contacts the tRNAs in the A and P-sites. This is Small ribosomal subunit protein uS13 from Pelagibacter ubique (strain HTCC1062).